A 141-amino-acid polypeptide reads, in one-letter code: Large ribosomal subunit protein uL11 (141 aa).

The protein belongs to the universal ribosomal protein uL11 family. Part of the ribosomal stalk of the 50S ribosomal subunit. Interacts with L10 and the large rRNA to form the base of the stalk. L10 forms an elongated spine to which L12 dimers bind in a sequential fashion forming a multimeric L10(L12)X complex. Post-translationally, one or more lysine residues are methylated.

Forms part of the ribosomal stalk which helps the ribosome interact with GTP-bound translation factors. This Methylacidiphilum infernorum (isolate V4) (Methylokorus infernorum (strain V4)) protein is Large ribosomal subunit protein uL11.